Consider the following 1063-residue polypeptide: MNRNVDKGWQAQIRPNERQSIALQIAQTLRIISPSISEVQLMNMALSFERQAFDGASSKNEYLTTCGKKTAQLRDQIRDTLQATQMKQMPSVYNNAGNVGALPTAGPNRLANNPRVMPRLQNQNVPMQAGMQQFARNMKLTPQQRQFLLQQSQIQQQRQQQQQQSQQPQQTQQPQASSPTAPNTEANQQRSGSVPGRIVPALTQQQLNNLCNQITALLARNGNPPIPMQKLQSMPPARLISIYQNQIQKFRSLQHMQQQQQQQQQQQQQQQQQQQQQQQQQQQQQQQQQKQAPQNAFFPNPQGNVGAQSLQSMSPQDQPSTQQQQPQRTAAPPNNPNVNATNNNRINIEMLNIPVPKQLFDQIPNLPPNVKIWRDVLELGQSQRLPPEQLKLIGMLYRKHLQIILQHRQQQLNKIQNARMNSQNAPNTNKLGNPQPDNTGNPQAFSQQAFAQQQQQQQQQLHRTSNPTSASVTSQNGQQPINTKLSANAAKTNYQSYLTNKARNATQPTQPPVSQVDYSNNLPPNLDTSSTFRSSASPPSAFTKAGNEALSVPLSGARNTAASRPTNLAAGNSSASIVQQLLECGGTMGQQKMTSRIRELTERVMHSLMRPVPLDLPHDQKVMIASLIKSAYPMFSRTNQLICLFYCLTGNEEATIQLIQMRHIFKLQLEGLQQGVFTCAPQTLAKIKEKTSRYFAFVKAQLLRLHHEVNNNNMSIQNALAHISSLRTASINQQQQPQPQSQQQQQASQFPQAPSVSSNVRPINGSIPNAQPSVPGQAQPAAKANSVGNTSFPVDSKLAFQSLDVSQPDLQAKQKIASQVMKHGLKPEDLKLPPSKKKKIENLSTVQKPKDSVVNTPDVIMSSVDEIPSSVSPGTIAKEEGMAKAREEAIANPLKYAIDAFVAVDHEEEVSAIKSSQTPSSILKTPQSFFIPPSTPDLSFTDNKNSLSPSNILSLDGKFSFNDDSELWADLGNEINSEIGFLKEPDTMNLALDADKDKTKMQNKLTQINFDESCFLDPAIDDKDPWNEMLHEKKVLLKQLQVGNEDEDNIAFPTSTNIWQVVI.

The span at 149-175 (LQQSQIQQQRQQQQQQSQQPQQTQQPQ) shows a compositional bias: low complexity. Disordered stretches follow at residues 149–194 (LQQS…SGSV), 286–342 (QQQQ…NATN), 422–482 (SQNA…QPIN), 500–544 (NKAR…AFTK), and 728–789 (TASI…SVGN). Composition is skewed to polar residues over residues 176–192 (ASSP…QRSG) and 301–310 (PQGNVGAQSL). The span at 311 to 342 (QSMSPQDQPSTQQQQPQRTAAPPNNPNVNATN) shows a compositional bias: low complexity. Positions 422 to 442 (SQNAPNTNKLGNPQPDNTGNP) are enriched in polar residues. The segment covering 443-460 (QAFSQQAFAQQQQQQQQQ) has biased composition (low complexity). 2 stretches are compositionally biased toward polar residues: residues 461–482 (LHRT…QPIN) and 500–527 (NKAR…PNLD). Low complexity-rich tracts occupy residues 528–542 (TSST…PSAF) and 733–758 (QQQQ…SVSS). Polar residues predominate over residues 766–776 (SIPNAQPSVPG). S948 bears the Phosphoserine mark.

Belongs to the Mediator complex subunit 15 family. As to quaternary structure, component of the Mediator complex. Component of a med15-hrp1 subcomplex, which flexibly associates with the other Mediator components.

The protein localises to the nucleus. Functionally, component of the Mediator complex, a coactivator involved in the regulated transcription of nearly all RNA polymerase II-dependent genes. Mediator functions as a bridge to convey information from gene-specific regulatory proteins to the basal RNA polymerase II transcription machinery. Mediator is recruited to promoters by direct interactions with regulatory proteins and serves as a scaffold for the assembly of a functional preinitiation complex with RNA polymerase II and the general transcription factors. Component of a med15-hrp1 subcomplex, linking the Mediator complex to the chromatin-remodeling activity of hrp1 at a distinct subset of hrp1-bound gene promoters. The polypeptide is Mediator of RNA polymerase II transcription subunit 15 (med15) (Schizosaccharomyces pombe (strain 972 / ATCC 24843) (Fission yeast)).